The chain runs to 440 residues: Xylose isomerase (440 aa).

Active-site residues include histidine 100 and aspartate 103. Positions 231, 267, 270, 295, 306, 308, and 338 each coordinate Mg(2+).

The protein belongs to the xylose isomerase family. As to quaternary structure, homotetramer. Mg(2+) is required as a cofactor.

It localises to the cytoplasm. The catalysed reaction is alpha-D-xylose = alpha-D-xylulofuranose. The chain is Xylose isomerase from Burkholderia orbicola (strain MC0-3).